The primary structure comprises 448 residues: ATP-dependent RNA helicase sub2 (448 aa).

Positions 19–29 (DAAATTAAPAA) are enriched in low complexity. A disordered region spans residues 19–43 (DAAATTAAPAANGAQDKKGDLTVSG). Residues 58–86 (TGFRDFLLKGELLRAITDCGFEHPSEVQQ) carry the Q motif motif. The 183-residue stretch at 89–271 (IPTAILNVDV…KKFMRNPLEV (183 aa)) folds into the Helicase ATP-binding domain. 102–109 (AKSGLGKT) contributes to the ATP binding site. The DECD box signature appears at 211-214 (DECD). A Helicase C-terminal domain is found at 283–444 (GLQQYYIKLS…EYPEGGVDSS (162 aa)).

It belongs to the DEAD box helicase family. DECD subfamily.

It localises to the nucleus. It carries out the reaction ATP + H2O = ADP + phosphate + H(+). In terms of biological role, ATP-binding RNA helicase involved in transcription elongation and required for the export of mRNA out of the nucleus. SUB2 also plays a role in pre-mRNA splicing and spliceosome assembly. May be involved in rDNA and telomeric silencing, and maintenance of genome integrity. The polypeptide is ATP-dependent RNA helicase sub2 (sub2) (Aspergillus fumigatus (strain ATCC MYA-4609 / CBS 101355 / FGSC A1100 / Af293) (Neosartorya fumigata)).